The following is a 298-amino-acid chain: Acetylglutamate kinase (298 aa).

Substrate is bound by residues 69 to 70 (GG), R91, and N196.

This sequence belongs to the acetylglutamate kinase family. ArgB subfamily.

It is found in the cytoplasm. It catalyses the reaction N-acetyl-L-glutamate + ATP = N-acetyl-L-glutamyl 5-phosphate + ADP. Its pathway is amino-acid biosynthesis; L-arginine biosynthesis; N(2)-acetyl-L-ornithine from L-glutamate: step 2/4. Catalyzes the ATP-dependent phosphorylation of N-acetyl-L-glutamate. This Granulibacter bethesdensis (strain ATCC BAA-1260 / CGDNIH1) protein is Acetylglutamate kinase.